Reading from the N-terminus, the 111-residue chain is MAEDKISAAVLDRLYATVQARKGADPETSYTAKLFHRGTAKIAQKVGEEAVETVIEAVRGDKAAMASESADLLYHLMVLWADAGLEPAAVWEKLAQREGTSGIAEKNARKS.

It belongs to the PRA-PH family.

It localises to the cytoplasm. The enzyme catalyses 1-(5-phospho-beta-D-ribosyl)-ATP + H2O = 1-(5-phospho-beta-D-ribosyl)-5'-AMP + diphosphate + H(+). Its pathway is amino-acid biosynthesis; L-histidine biosynthesis; L-histidine from 5-phospho-alpha-D-ribose 1-diphosphate: step 2/9. This is Phosphoribosyl-ATP pyrophosphatase (hisE) from Azospirillum brasilense.